A 155-amino-acid chain; its full sequence is Regulatory protein RecX (155 aa).

It belongs to the RecX family.

It localises to the cytoplasm. Its function is as follows. Modulates RecA activity. The protein is Regulatory protein RecX of Pseudomonas syringae pv. tomato (strain ATCC BAA-871 / DC3000).